The following is a 192-amino-acid chain: Protein GrpE (192 aa).

Residues 1 to 41 are disordered; the sequence is MSKEEFPHEKDLKDEVTPDKAPKKDPKAAPKEEVKENPVEN.

The protein belongs to the GrpE family. In terms of assembly, homodimer.

It is found in the cytoplasm. Functionally, participates actively in the response to hyperosmotic and heat shock by preventing the aggregation of stress-denatured proteins, in association with DnaK and GrpE. It is the nucleotide exchange factor for DnaK and may function as a thermosensor. Unfolded proteins bind initially to DnaJ; upon interaction with the DnaJ-bound protein, DnaK hydrolyzes its bound ATP, resulting in the formation of a stable complex. GrpE releases ADP from DnaK; ATP binding to DnaK triggers the release of the substrate protein, thus completing the reaction cycle. Several rounds of ATP-dependent interactions between DnaJ, DnaK and GrpE are required for fully efficient folding. The chain is Protein GrpE from Lactobacillus johnsonii (strain CNCM I-12250 / La1 / NCC 533).